The following is a 237-amino-acid chain: Ribonuclease PH (237 aa).

Phosphate contacts are provided by residues R86 and 124–126 (GTR).

This sequence belongs to the RNase PH family. In terms of assembly, homohexameric ring arranged as a trimer of dimers.

It carries out the reaction tRNA(n+1) + phosphate = tRNA(n) + a ribonucleoside 5'-diphosphate. Functionally, phosphorolytic 3'-5' exoribonuclease that plays an important role in tRNA 3'-end maturation. Removes nucleotide residues following the 3'-CCA terminus of tRNAs; can also add nucleotides to the ends of RNA molecules by using nucleoside diphosphates as substrates, but this may not be physiologically important. Probably plays a role in initiation of 16S rRNA degradation (leading to ribosome degradation) during starvation. The chain is Ribonuclease PH from Dinoroseobacter shibae (strain DSM 16493 / NCIMB 14021 / DFL 12).